A 159-amino-acid chain; its full sequence is MNFSIPTFVWTIINFLLLLVVLSYFLFKPVNEIIDKRSKDIEGDIEQARIDKDKAEELRIANEEEYKAAKKEGKIIVENYKAKAENVSEEIISDAHKEAEIIIERAKKEIQREREKAEYEIKNKTIELSLELSKKALERSIDEKMHRELIEEFISKVGN.

A helical membrane pass occupies residues 7–27 (TFVWTIINFLLLLVVLSYFLF).

The protein belongs to the ATPase B chain family. As to quaternary structure, F-type ATPases have 2 components, F(1) - the catalytic core - and F(0) - the membrane proton channel. F(1) has five subunits: alpha(3), beta(3), gamma(1), delta(1), epsilon(1). F(0) has three main subunits: a(1), b(2) and c(10-14). The alpha and beta chains form an alternating ring which encloses part of the gamma chain. F(1) is attached to F(0) by a central stalk formed by the gamma and epsilon chains, while a peripheral stalk is formed by the delta and b chains.

It localises to the cell membrane. Functionally, f(1)F(0) ATP synthase produces ATP from ADP in the presence of a proton or sodium gradient. F-type ATPases consist of two structural domains, F(1) containing the extramembraneous catalytic core and F(0) containing the membrane proton channel, linked together by a central stalk and a peripheral stalk. During catalysis, ATP synthesis in the catalytic domain of F(1) is coupled via a rotary mechanism of the central stalk subunits to proton translocation. In terms of biological role, component of the F(0) channel, it forms part of the peripheral stalk, linking F(1) to F(0). The protein is ATP synthase subunit b of Clostridium novyi (strain NT).